The following is a 747-amino-acid chain: DNA ligase (747 aa).

NAD(+) contacts are provided by residues 33 to 37 (DEEYD), 83 to 84 (SL), and Glu113. The active-site N6-AMP-lysine intermediate is the Lys115. The NAD(+) site is built by Arg136, Glu174, Lys299, and Lys323. The Zn(2+) site is built by Cys417, Cys420, Cys436, and Cys442. Residues 659–747 (TGGGVLSGLT…GPGALPEVAE (89 aa)) form the BRCT domain.

The protein belongs to the NAD-dependent DNA ligase family. LigA subfamily. Mg(2+) serves as cofactor. It depends on Mn(2+) as a cofactor.

It catalyses the reaction NAD(+) + (deoxyribonucleotide)n-3'-hydroxyl + 5'-phospho-(deoxyribonucleotide)m = (deoxyribonucleotide)n+m + AMP + beta-nicotinamide D-nucleotide.. DNA ligase that catalyzes the formation of phosphodiester linkages between 5'-phosphoryl and 3'-hydroxyl groups in double-stranded DNA using NAD as a coenzyme and as the energy source for the reaction. It is essential for DNA replication and repair of damaged DNA. This Leifsonia xyli subsp. xyli (strain CTCB07) protein is DNA ligase.